Reading from the N-terminus, the 171-residue chain is Urease accessory protein UreE (171 aa).

The segment at 143-171 is disordered; it reads SGGHQHHHGHDHDHGHHGHDHDHHHPDHE. Residues 152–171 show a composition bias toward basic and acidic residues; it reads HDHDHGHHGHDHDHHHPDHE.

The protein belongs to the UreE family.

Its subcellular location is the cytoplasm. In terms of biological role, involved in urease metallocenter assembly. Binds nickel. Probably functions as a nickel donor during metallocenter assembly. This is Urease accessory protein UreE from Brucella abortus biovar 1 (strain 9-941).